A 121-amino-acid polypeptide reads, in one-letter code: Large ribosomal subunit protein bL20 (121 aa).

Belongs to the bacterial ribosomal protein bL20 family.

Its function is as follows. Binds directly to 23S ribosomal RNA and is necessary for the in vitro assembly process of the 50S ribosomal subunit. It is not involved in the protein synthesizing functions of that subunit. This Chlamydia felis (strain Fe/C-56) (Chlamydophila felis) protein is Large ribosomal subunit protein bL20.